The following is a 221-amino-acid chain: Interleukin-12 subunit alpha (221 aa).

Residues 1–25 (MCPLRSLLLISTLVLLHHLPHLSLG) form the signal peptide. Disulfide bonds link C39–C112, C66–C198, and C87–C125. N95 carries an N-linked (GlcNAc...) asparagine glycan.

It belongs to the IL-6 superfamily. As to quaternary structure, heterodimer with IL12B; disulfide-linked. This heterodimer is known as interleukin IL-12. Heterodimer with EBI3/IL27B; not disulfide-linked. This heterodimer is known as interleukin IL-35. Interacts with NBR1; this interaction promotes IL-12 secretion.

It is found in the secreted. Functionally, heterodimerizes with IL12B to form the IL-12 cytokine or with EBI3/IL27B to form the IL-35 cytokine. IL-12 is primarily produced by professional antigen-presenting cells (APCs) such as B-cells and dendritic cells (DCs) as well as macrophages and granulocytes and regulates T-cell and natural killer-cell responses, induces the production of interferon-gamma (IFN-gamma), favors the differentiation of T-helper 1 (Th1) cells and is an important link between innate resistance and adaptive immunity. Mechanistically, exerts its biological effects through a receptor composed of IL12R1 and IL12R2 subunits. Binding to the receptor results in the rapid tyrosine phosphorylation of a number of cellular substrates including the JAK family kinases TYK2 and JAK2. In turn, recruited STAT4 gets phosphorylated and translocates to the nucleus where it regulates cytokine/growth factor responsive genes. As part of IL-35, plays essential roles in maintaining the immune homeostasis of the liver microenvironment and also functions as an immune-suppressive cytokine. Mediates biological events through unconventional receptors composed of IL12RB2 and gp130/IL6ST heterodimers or homodimers. Signaling requires the transcription factors STAT1 and STAT4, which form a unique heterodimer that binds to distinct DNA sites. This chain is Interleukin-12 subunit alpha (IL12A), found in Bos taurus (Bovine).